We begin with the raw amino-acid sequence, 126 residues long: Large ribosomal subunit protein bL12 (126 aa).

It belongs to the bacterial ribosomal protein bL12 family. As to quaternary structure, homodimer. Part of the ribosomal stalk of the 50S ribosomal subunit. Forms a multimeric L10(L12)X complex, where L10 forms an elongated spine to which 2 to 4 L12 dimers bind in a sequential fashion. Binds GTP-bound translation factors.

Its function is as follows. Forms part of the ribosomal stalk which helps the ribosome interact with GTP-bound translation factors. Is thus essential for accurate translation. The sequence is that of Large ribosomal subunit protein bL12 from Blochmanniella floridana.